The sequence spans 225 residues: Ribonuclease 3 (225 aa).

Residues 5–127 (LDRLQRSLGH…VFAATFLDQG (123 aa)) form the RNase III domain. Position 40 (E40) interacts with Mg(2+). D44 is an active-site residue. Mg(2+) contacts are provided by D113 and E116. Residue E116 is part of the active site. Residues 154–224 (DPKTALQELL…AELALAQLRK (71 aa)) form the DRBM domain.

The protein belongs to the ribonuclease III family. In terms of assembly, homodimer. Mg(2+) is required as a cofactor.

Its subcellular location is the cytoplasm. The catalysed reaction is Endonucleolytic cleavage to 5'-phosphomonoester.. Functionally, digests double-stranded RNA. Involved in the processing of primary rRNA transcript to yield the immediate precursors to the large and small rRNAs (23S and 16S). Processes some mRNAs, and tRNAs when they are encoded in the rRNA operon. Processes pre-crRNA and tracrRNA of type II CRISPR loci if present in the organism. In Aromatoleum aromaticum (strain DSM 19018 / LMG 30748 / EbN1) (Azoarcus sp. (strain EbN1)), this protein is Ribonuclease 3.